Reading from the N-terminus, the 177-residue chain is uncharacterized protein (177 aa).

Transmembrane regions (helical) follow at residues 4–24 (IIIL…GFIL), 33–53 (ILSI…LHWI), 80–100 (IAFI…GSFL), and 115–135 (MLGA…LLYV).

Its subcellular location is the cell membrane. This is an uncharacterized protein from Bacillus subtilis (strain 168).